The sequence spans 371 residues: Probable diguanylate cyclase DgcC (371 aa).

The next 5 membrane-spanning stretches (helical) occupy residues 46–66 (AVGLAGMFLPIASTLVSHPPP), 68–88 (WWWLVLVGWAFVWPHLAWQIA), 112–132 (WVGVMGVNVLPSTAMLMIMCL), 143–163 (FVAGLVLMVVSCLVTLELTGI), and 171–191 (PLEWWLSLPIIVIYPLLFGWV). The region spanning 240–371 (RDATLLIIDI…AGRNRTEVAA (132 aa)) is the GGDEF domain. Residues Asp248 and Ile249 each contribute to the Mg(2+) site. 2 residues coordinate substrate: Asn256 and Asp265. Residue Asp291 participates in Mg(2+) binding.

It depends on Mg(2+) as a cofactor.

The protein localises to the cell inner membrane. It catalyses the reaction 2 GTP = 3',3'-c-di-GMP + 2 diphosphate. It participates in purine metabolism; 3',5'-cyclic di-GMP biosynthesis. Functionally, a probable diguanylate cyclase. The last member of a cascade of expressed proteins, its expression requires DgcM. DgcC production induces biosynthesis of cellulose in some E.coli isolates, but not in K12 strains. Cyclic-di-GMP is a second messenger which controls cell surface-associated traits in bacteria. The protein is Probable diguanylate cyclase DgcC of Escherichia coli (strain K12).